The sequence spans 287 residues: Elongation factor Ts (287 aa).

Residues 80-83 are involved in Mg(2+) ion dislocation from EF-Tu; that stretch reads TDFL.

It belongs to the EF-Ts family.

It is found in the cytoplasm. Its function is as follows. Associates with the EF-Tu.GDP complex and induces the exchange of GDP to GTP. It remains bound to the aminoacyl-tRNA.EF-Tu.GTP complex up to the GTP hydrolysis stage on the ribosome. The sequence is that of Elongation factor Ts from Pseudomonas syringae pv. tomato (strain ATCC BAA-871 / DC3000).